Reading from the N-terminus, the 179-residue chain is NADH dehydrogenase [ubiquinone] 1 beta subcomplex subunit 9 (179 aa).

Ala-2 carries the post-translational modification N-acetylalanine. At Ser-85 the chain carries Phosphoserine.

This sequence belongs to the complex I LYR family. In terms of assembly, mammalian complex I is composed of 45 different subunits.

The protein resides in the mitochondrion inner membrane. Functionally, accessory subunit of the mitochondrial membrane respiratory chain NADH dehydrogenase (Complex I), that is believed to be not involved in catalysis. Complex I functions in the transfer of electrons from NADH to the respiratory chain. The immediate electron acceptor for the enzyme is believed to be ubiquinone. The sequence is that of NADH dehydrogenase [ubiquinone] 1 beta subcomplex subunit 9 (Ndufb9) from Mus musculus (Mouse).